The primary structure comprises 260 residues: MGKKKMKLSSLFKGGAGGLLAVPLCYNAKTLSFRVGDDMIKTVNSVFFDHHHNNNNGGDLLEAETPESWFTNSSETASHSTESDQDLDAESLEMVVRGVVRSERLFFDPGVTSSILEEIEEKSKSDLKSKETVAVGEDRSTPIEEISVAVAMESEDPYGDFRRSMEEMVTSHGELAKDWESLESMLAWYLRMNGRKSHGVIVSAFVDLLSGLSDSGAGITSASVSDSARYSTAVSSLPSSPVYSLSQGQTEIQEEERRSC.

The region spanning 150–211 (VAMESEDPYG…VSAFVDLLSG (62 aa)) is the OVATE domain.

In terms of tissue distribution, expressed in roots, rosette and cauline leaves, shoots, stems, flower buds and siliques.

Its subcellular location is the nucleus. Its function is as follows. Transcriptional repressor that regulates multiple aspects of plant growth and development through the regulation of BEL1-LIKE (BLH) and KNOX TALE (KNAT) homeodomain transcription factors. The protein is Transcription repressor OFP13 (OFP13) of Arabidopsis thaliana (Mouse-ear cress).